Here is a 300-residue protein sequence, read N- to C-terminus: Ribosomal RNA small subunit methyltransferase H (300 aa).

Residues 35 to 37 (GGH), Asp-55, Phe-82, Asp-100, and Gln-107 contribute to the S-adenosyl-L-methionine site.

Belongs to the methyltransferase superfamily. RsmH family.

It localises to the cytoplasm. The enzyme catalyses cytidine(1402) in 16S rRNA + S-adenosyl-L-methionine = N(4)-methylcytidine(1402) in 16S rRNA + S-adenosyl-L-homocysteine + H(+). In terms of biological role, specifically methylates the N4 position of cytidine in position 1402 (C1402) of 16S rRNA. The chain is Ribosomal RNA small subunit methyltransferase H from Chlamydia trachomatis serovar L2 (strain ATCC VR-902B / DSM 19102 / 434/Bu).